Reading from the N-terminus, the 400-residue chain is D(3) dopamine receptor (400 aa).

At 1 to 32 (MASLSQLSGHLNYTCGAENSTGASQARPHAYY) the chain is on the extracellular side. Residues Asn-12 and Asn-19 are each glycosylated (N-linked (GlcNAc...) asparagine). The chain crosses the membrane as a helical span at residues 33–55 (ALSYCALILAIVFGNGLVCMAVL). Residues 56–65 (KERALQTTTN) lie on the Cytoplasmic side of the membrane. Residues 66–88 (YLVVSLAVADLLVATLVMPWVVY) traverse the membrane as a helical segment. The Extracellular segment spans residues 89–104 (LEVTGGVWNFSRICCD). The N-linked (GlcNAc...) asparagine glycan is linked to Asn-97. Cys-103 and Cys-181 form a disulfide bridge. A helical membrane pass occupies residues 105–126 (VFVTLDVMMCTASILNLCAISI). Asp-110 is a binding site for eticlopride. Topologically, residues 127-149 (DRYTAVVMPVHYQHGTGQSSCRR) are cytoplasmic. A helical membrane pass occupies residues 150–170 (VALMITAVWVLAFAVSCPLLF). The Extracellular segment spans residues 171–187 (GFNTTGDPTVCSISNPD). An N-linked (GlcNAc...) asparagine glycan is attached at Asn-173. Residues 188 to 209 (FVIYSSVVSFYLPFGVTVLVYA) traverse the membrane as a helical segment. Residues 210–329 (RIYVVLKQRR…VPLREKKATQ (120 aa)) lie on the Cytoplasmic side of the membrane. Residues 330-351 (MVAIVLGAFIVCWLPFFLTHVL) traverse the membrane as a helical segment. Eticlopride-binding residues include Phe-345 and His-349. At 352–366 (NTHCQTCHVSPELYS) the chain is on the extracellular side. A disulfide bond links Cys-355 and Cys-358. A helical membrane pass occupies residues 367-386 (ATTWLGYVNSALNPVIYTTF). Residues 387-400 (NIEFRKAFLKILSC) are Cytoplasmic-facing.

It belongs to the G-protein coupled receptor 1 family. Interacts with CLIC6. Interacts with GRK4. Interacts with PALM. Interacts with FLNA (via filamin repeat 21); increases PKA-mediated phosphorylation of FLNA. Phosphorylated by GRK4 (GRK4-alpha and GRK4-gamma). Post-translationally, palmitoylated. Brain.

It is found in the cell membrane. Its function is as follows. Dopamine receptor whose activity is mediated by G proteins which inhibit adenylyl cyclase. Promotes cell proliferation. This is D(3) dopamine receptor from Homo sapiens (Human).